Here is a 539-residue protein sequence, read N- to C-terminus: Glutamyl-tRNA(Gln) amidotransferase subunit B, mitochondrial (539 aa).

The protein belongs to the GatB/GatE family. GatB subfamily. Subunit of the heterotrimeric GatFAB amidotransferase (AdT) complex, composed of A, B and F subunits.

It localises to the mitochondrion. It catalyses the reaction L-glutamyl-tRNA(Gln) + L-glutamine + ATP + H2O = L-glutaminyl-tRNA(Gln) + L-glutamate + ADP + phosphate + H(+). Its function is as follows. Allows the formation of correctly charged Gln-tRNA(Gln) through the transamidation of misacylated Glu-tRNA(Gln) in the mitochondria. The reaction takes place in the presence of glutamine and ATP through an activated gamma-phospho-Glu-tRNA(Gln). The protein is Glutamyl-tRNA(Gln) amidotransferase subunit B, mitochondrial of Kluyveromyces lactis (strain ATCC 8585 / CBS 2359 / DSM 70799 / NBRC 1267 / NRRL Y-1140 / WM37) (Yeast).